A 266-amino-acid polypeptide reads, in one-letter code: Glutamate racemase (266 aa).

Substrate is bound by residues aspartate 9–serine 10 and tyrosine 41–glycine 42. Catalysis depends on cysteine 72, which acts as the Proton donor/acceptor. Position 73-74 (asparagine 73–threonine 74) interacts with substrate. Cysteine 183 (proton donor/acceptor) is an active-site residue. Threonine 184–histidine 185 contacts substrate.

It belongs to the aspartate/glutamate racemases family.

The enzyme catalyses L-glutamate = D-glutamate. It participates in cell wall biogenesis; peptidoglycan biosynthesis. Provides the (R)-glutamate required for cell wall biosynthesis. This chain is Glutamate racemase, found in Listeria innocua serovar 6a (strain ATCC BAA-680 / CLIP 11262).